We begin with the raw amino-acid sequence, 156 residues long: Flagellar assembly factor FliW (156 aa).

This sequence belongs to the FliW family. Interacts with translational regulator CsrA and flagellin(s).

It localises to the cytoplasm. Functionally, acts as an anti-CsrA protein, binds CsrA and prevents it from repressing translation of its target genes, one of which is flagellin. Binds to flagellin and participates in the assembly of the flagellum. The polypeptide is Flagellar assembly factor FliW (Syntrophomonas wolfei subsp. wolfei (strain DSM 2245B / Goettingen)).